The following is an 88-amino-acid chain: Small ribosomal subunit protein uS17 (88 aa).

It belongs to the universal ribosomal protein uS17 family. In terms of assembly, part of the 30S ribosomal subunit.

Functionally, one of the primary rRNA binding proteins, it binds specifically to the 5'-end of 16S ribosomal RNA. The protein is Small ribosomal subunit protein uS17 of Synechococcus sp. (strain WH7803).